Reading from the N-terminus, the 82-residue chain is Small ribosomal subunit protein bS20 (82 aa).

It belongs to the bacterial ribosomal protein bS20 family.

Binds directly to 16S ribosomal RNA. This Lysinibacillus sphaericus (strain C3-41) protein is Small ribosomal subunit protein bS20.